The primary structure comprises 326 residues: Methionyl-tRNA formyltransferase (326 aa).

(6S)-5,6,7,8-tetrahydrofolate is bound at residue 110–113; the sequence is SLLP. The segment at 307-326 is disordered; sequence VGTRFSPPEAPQREPAPGEA.

This sequence belongs to the Fmt family.

The catalysed reaction is L-methionyl-tRNA(fMet) + (6R)-10-formyltetrahydrofolate = N-formyl-L-methionyl-tRNA(fMet) + (6S)-5,6,7,8-tetrahydrofolate + H(+). Its function is as follows. Attaches a formyl group to the free amino group of methionyl-tRNA(fMet). The formyl group appears to play a dual role in the initiator identity of N-formylmethionyl-tRNA by promoting its recognition by IF2 and preventing the misappropriation of this tRNA by the elongation apparatus. The chain is Methionyl-tRNA formyltransferase from Symbiobacterium thermophilum (strain DSM 24528 / JCM 14929 / IAM 14863 / T).